The chain runs to 863 residues: Leucine--tRNA ligase (863 aa).

The short motif at 42-52 (PYPSGRLHMGH) is the 'HIGH' region element. The 'KMSKS' region signature appears at 622-626 (KMSKS). Residue Lys625 participates in ATP binding.

Belongs to the class-I aminoacyl-tRNA synthetase family.

Its subcellular location is the cytoplasm. It catalyses the reaction tRNA(Leu) + L-leucine + ATP = L-leucyl-tRNA(Leu) + AMP + diphosphate. This chain is Leucine--tRNA ligase, found in Shewanella sediminis (strain HAW-EB3).